The primary structure comprises 309 residues: Cysteinyl leukotriene receptor 2 (309 aa).

The Extracellular portion of the chain corresponds to 1–26; it reads MEVTGTPSSYSNRNCTIENFKKEFYP. A glycan (N-linked (GlcNAc...) asparagine) is linked at Asn14. The chain crosses the membrane as a helical span at residues 27-47; the sequence is IIYLIIFFWGALGNGFSIYVF. At 48 to 56 the chain is on the cytoplasmic side; sequence LQTCKKSTS. Residues 57 to 77 form a helical membrane-spanning segment; the sequence is VNVFMLNLATSDFLFISTLPF. Residues 78–98 lie on the Extracellular side of the membrane; the sequence is RADYYFRGSNWIFGDLACRVM. A disulfide bridge links Cys95 with Cys171. Residues 99–119 traverse the membrane as a helical segment; sequence SYSLYVNMYTSIYFLTVLSVV. The Cytoplasmic portion of the chain corresponds to 120-138; it reads RFLATVHPFRMFHVTSVRS. Residues 139–159 traverse the membrane as a helical segment; that stretch reads AWILCGIIWVFIMASSALLLV. Over 160–187 the chain is Extracellular; it reads NGQEEKDNIISCLELSPQKFKSLLIMNH. A helical membrane pass occupies residues 188–208; the sequence is IAVAVGFLLPFLTLTVCYLLI. Residues 209–229 are Cytoplasmic-facing; that stretch reads IRILLKAEIPESGPRAAHRKA. The helical transmembrane segment at 230 to 250 threads the bilayer; that stretch reads LTTIVIAMITFLLCFLPYHAL. Over 251–271 the chain is Extracellular; that stretch reads RTLHLVTWDKDSCGDVLHKAT. Residues 272–292 form a helical membrane-spanning segment; sequence VITLTMAAANSCFNPFLYYFA. Residues 293–309 lie on the Cytoplasmic side of the membrane; it reads GENFKARLRAIFSKVHL.

Belongs to the G-protein coupled receptor 1 family. In terms of tissue distribution, widely expressed at low levels, with highest expression in the spleen, thymus and adrenal gland, and lower in the kidney, brain and peripheral blood leukocytes.

The protein localises to the cell membrane. In terms of biological role, receptor for cysteinyl leukotrienes. The response is mediated via a G-protein that activates a phosphatidylinositol-calcium second messenger system. The rank order of affinities for the leukotrienes is LTC4 = LTD4 &gt;&gt; LTE4. In Mus musculus (Mouse), this protein is Cysteinyl leukotriene receptor 2 (Cysltr2).